We begin with the raw amino-acid sequence, 96 residues long: SAGA-associated factor 11 (96 aa).

The SGF11-type zinc-finger motif lies at 68–89; that stretch reads FHCKNCGRDVSANRFAAHLQRC.

It belongs to the SGF11 family. In terms of assembly, component of the 1.8 MDa SAGA transcription coactivator-HAT complex. SAGA is built of 5 distinct domains with specialized functions. Within the SAGA complex, SUS1, SGF11, SGF73 and UBP8 form an additional subcomplex of SAGA called the DUB module (deubiquitination module). Interacts directly with SGF73, SUS1 and UBP8.

The protein localises to the nucleus. Functions as a component of the transcription regulatory histone acetylation (HAT) complex SAGA. At the promoters, SAGA is required for recruitment of the basal transcription machinery. It influences RNA polymerase II transcriptional activity through different activities such as TBP interaction and promoter selectivity, interaction with transcription activators, and chromatin modification through histone acetylation and deubiquitination. SAGA acetylates nucleosomal histone H3 to some extent (to form H3K9ac, H3K14ac, H3K18ac and H3K23ac). SAGA interacts with DNA via upstream activating sequences (UASs). Involved in transcriptional regulation of a subset of SAGA-regulated genes. Within the SAGA complex, participates in a subcomplex, that specifically deubiquitinates histones H2B. The sequence is that of SAGA-associated factor 11 from Vanderwaltozyma polyspora (strain ATCC 22028 / DSM 70294 / BCRC 21397 / CBS 2163 / NBRC 10782 / NRRL Y-8283 / UCD 57-17) (Kluyveromyces polysporus).